A 311-amino-acid polypeptide reads, in one-letter code: Uridine phosphorylase 1 (311 aa).

Residues G61, R95, and 139 to 142 (RIGT) each bind phosphate. Uridine is bound by residues 143–144 (SG) and 218–220 (QGR).

The protein belongs to the PNP/UDP phosphorylase family. Homodimer. The N-terminus is blocked.

The catalysed reaction is uridine + phosphate = alpha-D-ribose 1-phosphate + uracil. The enzyme catalyses 2'-deoxyuridine + phosphate = 2-deoxy-alpha-D-ribose 1-phosphate + uracil. It functions in the pathway pyrimidine metabolism; UMP biosynthesis via salvage pathway; uracil from uridine (phosphorylase route): step 1/1. With respect to regulation, strongly inhibited by 2,2'-anhydro-5-ethyluridine, a competitive inhibitor. Catalyzes the reversible phosphorylytic cleavage of uridine to uracil and ribose-1-phosphate which can then be utilized as carbon and energy sources or in the rescue of pyrimidine bases for nucleotide synthesis. Shows broad substrate specificity and can also accept deoxyuridine and other analogous compounds. This Mus musculus (Mouse) protein is Uridine phosphorylase 1.